The primary structure comprises 285 residues: MIIGCSASQKLAASVADLLDEPLCPVETRKFPDGERYIRVKEEVEGEVTVVQSTGYPQDENLMELLFMIENLKDLGADYVRAAIPYFGYGRQERRFKSGEAVSAKIVAHLLEAAGADEIVTVNLHENCLSEFFRVPVRELSAMPLIAEHISFLDDPVIIAPDKGALGHAREVSDILGCECDYMEKVRISPEVVETRVSDLDVEGKDAVVVDDIISTGGTIVNAAGILGKCGASSITVCCVHPVLVEDALLKIFSAGVERVIATDTLKSDVSEISVAPLIADVMKD.

ATP contacts are provided by residues 33-35 and 91-92; these read DGE and RQ. Positions 125 and 162 each coordinate Mg(2+). Lysine 185 is a catalytic residue. D-ribose 5-phosphate contacts are provided by residues arginine 187, aspartate 211, and 215–219; that span reads STGGT.

Belongs to the ribose-phosphate pyrophosphokinase family. Class III (archaeal) subfamily. Mg(2+) serves as cofactor.

It is found in the cytoplasm. The enzyme catalyses D-ribose 5-phosphate + ATP = 5-phospho-alpha-D-ribose 1-diphosphate + AMP + H(+). Its pathway is metabolic intermediate biosynthesis; 5-phospho-alpha-D-ribose 1-diphosphate biosynthesis; 5-phospho-alpha-D-ribose 1-diphosphate from D-ribose 5-phosphate (route I): step 1/1. Functionally, involved in the biosynthesis of the central metabolite phospho-alpha-D-ribosyl-1-pyrophosphate (PRPP) via the transfer of pyrophosphoryl group from ATP to 1-hydroxyl of ribose-5-phosphate (Rib-5-P). This is Ribose-phosphate pyrophosphokinase from Methanothermobacter thermautotrophicus (strain ATCC 29096 / DSM 1053 / JCM 10044 / NBRC 100330 / Delta H) (Methanobacterium thermoautotrophicum).